The chain runs to 103 residues: Zinc-containing ferredoxin (103 aa).

Residues 1–36 (GIDPNYRTSKPVVGDHSGHKIYGPVESPKVLGVHGT) form an N-terminal extension region. Residue His-19 coordinates Zn(2+). Lys-29 carries the post-translational modification N6-methyllysine. His-34 contributes to the Zn(2+) binding site. 4Fe-4S ferredoxin-type domains lie at 35–65 (GTIV…WYET) and 74–103 (KADP…VKPP). Cys-45 and Cys-51 together coordinate [3Fe-4S] cluster. Cys-55 contributes to the [4Fe-4S] cluster binding site. Zn(2+) is bound at residue Asp-76. [4Fe-4S] cluster-binding residues include Cys-83, Cys-86, and Cys-89. A [3Fe-4S] cluster-binding site is contributed by Cys-93.

[3Fe-4S] cluster serves as cofactor. [4Fe-4S] cluster is required as a cofactor. It depends on Zn(2+) as a cofactor.

Ferredoxins are iron-sulfur proteins that transfer electrons in a wide variety of metabolic reactions. The chain is Zinc-containing ferredoxin (zfx) from Sulfolobus acidocaldarius (strain ATCC 33909 / DSM 639 / JCM 8929 / NBRC 15157 / NCIMB 11770).